The following is a 248-amino-acid chain: 23S rRNA (guanosine-2'-O-)-methyltransferase RlmB (248 aa).

Gly198, Leu218, and Leu227 together coordinate S-adenosyl-L-methionine.

It belongs to the class IV-like SAM-binding methyltransferase superfamily. RNA methyltransferase TrmH family. RlmB subfamily.

It localises to the cytoplasm. It catalyses the reaction guanosine(2251) in 23S rRNA + S-adenosyl-L-methionine = 2'-O-methylguanosine(2251) in 23S rRNA + S-adenosyl-L-homocysteine + H(+). Its function is as follows. Specifically methylates the ribose of guanosine 2251 in 23S rRNA. The protein is 23S rRNA (guanosine-2'-O-)-methyltransferase RlmB of Pseudomonas aeruginosa (strain ATCC 15692 / DSM 22644 / CIP 104116 / JCM 14847 / LMG 12228 / 1C / PRS 101 / PAO1).